A 1043-amino-acid polypeptide reads, in one-letter code: MAAVTFASAITNAITSKPALTGMVQFGSFPPMPLRSTTVTTVATSVAQPKLYTVQFGSLDPVVVKSGAGSLAKATRQQPNVEIDVSLSEAAALEVAKPRSNAVLRMHEEANKERALFLDWEASLKRSSYGIAEDEKVVMTTHGVSKIVPRSSRAMKLKRARERRRAQQPIILKWEPKLSGISIGGGLSASVIEAEEVRTKWPLHKTPSMKKRTVHRICKMNDQGVDMLTRSLVKIFKTKSANIEYIGKKSIKVDFIRKERTKFARIQVAHLLGKRAQRDLLTGMEENHFIDILSKYSGNKTTINPGVVCAGWSGIVVGNGILTQKRSRSPSEAFVIRGEHEGKLYDARIKVTRTMSHKIVHFSAAGANFWKGFDRCFLAYRSDNREHTCYSGLDVTECGEVAALMCLAMFPCGKITCPDCVTDSELSQGQASGPSMKHRLTQLRDVIKSSYPRFKHAVQILDRYEQSLSSANENYQDFAEIQSISDGVEKAAFPHVNKLNAILIKGATVTGEEFSQATKHLLEIARYLKNRTENIEKGSLKSFRNKISQKAHINPTLMCDNQLDRNGNFIWGERGYHAKRFFSNYFEIIDPKKGYTQYETRAVPNGSRKLAIGKLIVPTNFEVLREQMKGEPVEPYPVTVECVSKLQGDFVHACCCVTTESGDPVLSEIKMPTKHHLVIGNSGDPKYIDLPEIEENKMYIAKEGYCYINIFLAMLVNVKESQAKEFTKVVRDKLVGELGKWPTLLDVATACYFLKVFYPDVANAELPRMLVDHKTKIIHVVDSYGSLSTGYHVLKTNTVEQLIKFTRCNLESSLKHYRVGGTEWEDTHGSSNIDNPQWCIKRLIKGVYKPKQLKEDMLANPFLPLYALLSPGVILAFYNSGSLEYLMNHYIRVDSNVAVLLVVLKSLAKKVSTSQSVLAQLQIIERSLPELIEAKANVNGPDDAATRACNRFMGMLLHMAEPNWELADGGYTILRDHSISILEKKLSTNLGRSMERVKLVGALCYKILLVKASNLYTERFANEKRSRFRRQIQRVSHVILRTE.

Residues 219 to 362 (KMNDQGVDML…RTMSHKIVHF (144 aa)) form the Peptidase S30 domain. Catalysis depends on for P1 proteinase activity residues His270, Asp279, and Ser313. Positions 414–417 (KITC) match the Involved in interaction with stylet and aphid transmission motif. The Involved in virions binding and aphid transmission signature appears at 672 to 674 (PTK). One can recognise a Peptidase C6 domain in the interval 698-820 (MYIAKEGYCY…ESSLKHYRVG (123 aa)). Active-site for helper component proteinase activity residues include Cys706 and His779.

It belongs to the potyviridae P3N-PIPO polyprotein family. As to quaternary structure, interacts (via PIPO domain) with host PCaP1 protein; this interaction may help to anchor the movement complex to the plasma membrane from which the complex could move to the plasmodesmata. Potyviral RNA is expressed as two polyproteins which undergo post-translational proteolytic processing. Genome polyprotein is processed by NIa-pro, P1 and HC-pro proteinases resulting in the production of at least ten individual proteins. P3N-PIPO is cleaved by P1 and HC-pro proteinases resulting in the production of three individual proteins. The P1 proteinase and the HC-pro cleave only their respective C-termini autocatalytically.

It is found in the host cell junction. The protein localises to the host plasmodesma. It catalyses the reaction Hydrolyzes a Gly-|-Gly bond at its own C-terminus, commonly in the sequence -Tyr-Xaa-Val-Gly-|-Gly, in the processing of the potyviral polyprotein.. In terms of biological role, cysteine protease that cleaves a Gly-Gly dipeptide at its own C-terminus. Required for aphid transmission and also has proteolytic activity. Interacts with virions and aphid stylets. Acts as a suppressor of RNA-mediated gene silencing, also known as post-transcriptional gene silencing (PTGS), a mechanism of plant viral defense that limits the accumulation of viral RNAs. May have RNA-binding activity. Allows efficient cell to cell propagation, by bypassing the host cell wall barrier. Transports viral genome to neighboring plant cells directly through plasmosdesmata, without any budding. The chain is P3N-PIPO polyprotein from Alliaria petiolata (Garlic mustard).